A 178-amino-acid chain; its full sequence is Crossover junction endodeoxyribonuclease RuvC (178 aa).

Catalysis depends on residues D8, E72, and D144. 3 residues coordinate Mg(2+): D8, E72, and D144.

It belongs to the RuvC family. In terms of assembly, homodimer which binds Holliday junction (HJ) DNA. The HJ becomes 2-fold symmetrical on binding to RuvC with unstacked arms; it has a different conformation from HJ DNA in complex with RuvA. In the full resolvosome a probable DNA-RuvA(4)-RuvB(12)-RuvC(2) complex forms which resolves the HJ. Mg(2+) serves as cofactor.

The protein resides in the cytoplasm. It catalyses the reaction Endonucleolytic cleavage at a junction such as a reciprocal single-stranded crossover between two homologous DNA duplexes (Holliday junction).. The RuvA-RuvB-RuvC complex processes Holliday junction (HJ) DNA during genetic recombination and DNA repair. Endonuclease that resolves HJ intermediates. Cleaves cruciform DNA by making single-stranded nicks across the HJ at symmetrical positions within the homologous arms, yielding a 5'-phosphate and a 3'-hydroxyl group; requires a central core of homology in the junction. The consensus cleavage sequence is 5'-(A/T)TT(C/G)-3'. Cleavage occurs on the 3'-side of the TT dinucleotide at the point of strand exchange. HJ branch migration catalyzed by RuvA-RuvB allows RuvC to scan DNA until it finds its consensus sequence, where it cleaves and resolves the cruciform DNA. The protein is Crossover junction endodeoxyribonuclease RuvC of Idiomarina loihiensis (strain ATCC BAA-735 / DSM 15497 / L2-TR).